The chain runs to 430 residues: UDP-N-acetylglucosamine 1-carboxyvinyltransferase (430 aa).

Position 22-23 (22-23 (KN)) interacts with phosphoenolpyruvate. Position 102 (Arg102) interacts with UDP-N-acetyl-alpha-D-glucosamine. The Proton donor role is filled by Cys126. Residue Cys126 is modified to 2-(S-cysteinyl)pyruvic acid O-phosphothioketal. Residues 131–135 (RPVDL), 172–175 (KVSV), Asp317, and Ile339 each bind UDP-N-acetyl-alpha-D-glucosamine.

This sequence belongs to the EPSP synthase family. MurA subfamily.

Its subcellular location is the cytoplasm. It catalyses the reaction phosphoenolpyruvate + UDP-N-acetyl-alpha-D-glucosamine = UDP-N-acetyl-3-O-(1-carboxyvinyl)-alpha-D-glucosamine + phosphate. The protein operates within cell wall biogenesis; peptidoglycan biosynthesis. Functionally, cell wall formation. Adds enolpyruvyl to UDP-N-acetylglucosamine. This Sinorhizobium medicae (strain WSM419) (Ensifer medicae) protein is UDP-N-acetylglucosamine 1-carboxyvinyltransferase.